Here is a 416-residue protein sequence, read N- to C-terminus: Serine hydroxymethyltransferase (416 aa).

(6S)-5,6,7,8-tetrahydrofolate is bound by residues L118 and 122 to 124 (GHL). K226 is modified (N6-(pyridoxal phosphate)lysine). Residues E242 and 350–352 (SPF) each bind (6S)-5,6,7,8-tetrahydrofolate.

The protein belongs to the SHMT family. Homodimer. It depends on pyridoxal 5'-phosphate as a cofactor.

It is found in the cytoplasm. It catalyses the reaction (6R)-5,10-methylene-5,6,7,8-tetrahydrofolate + glycine + H2O = (6S)-5,6,7,8-tetrahydrofolate + L-serine. It participates in one-carbon metabolism; tetrahydrofolate interconversion. Its pathway is amino-acid biosynthesis; glycine biosynthesis; glycine from L-serine: step 1/1. Catalyzes the reversible interconversion of serine and glycine with tetrahydrofolate (THF) serving as the one-carbon carrier. This reaction serves as the major source of one-carbon groups required for the biosynthesis of purines, thymidylate, methionine, and other important biomolecules. Also exhibits THF-independent aldolase activity toward beta-hydroxyamino acids, producing glycine and aldehydes, via a retro-aldol mechanism. The sequence is that of Serine hydroxymethyltransferase from Helicobacter pylori (strain ATCC 700392 / 26695) (Campylobacter pylori).